Consider the following 194-residue polypeptide: Holliday junction branch migration complex subunit RuvA (194 aa).

A domain I region spans residues 1–64 (MIAYIQGSIT…QDAHTLYGFS (64 aa)). The segment at 65–143 (TIEEKQCFLQ…KVGNMLSLQP (79 aa)) is domain II. A flexible linker region spans residues 144–150 (SGQEAIY). The segment at 150–194 (YQEALAALSKLGIHKSTAEKTVAAILKEHQGEITVESLIKLALKG) is domain III.

The protein belongs to the RuvA family. Homotetramer. Forms an RuvA(8)-RuvB(12)-Holliday junction (HJ) complex. HJ DNA is sandwiched between 2 RuvA tetramers; dsDNA enters through RuvA and exits via RuvB. An RuvB hexamer assembles on each DNA strand where it exits the tetramer. Each RuvB hexamer is contacted by two RuvA subunits (via domain III) on 2 adjacent RuvB subunits; this complex drives branch migration. In the full resolvosome a probable DNA-RuvA(4)-RuvB(12)-RuvC(2) complex forms which resolves the HJ.

The protein resides in the cytoplasm. In terms of biological role, the RuvA-RuvB-RuvC complex processes Holliday junction (HJ) DNA during genetic recombination and DNA repair, while the RuvA-RuvB complex plays an important role in the rescue of blocked DNA replication forks via replication fork reversal (RFR). RuvA specifically binds to HJ cruciform DNA, conferring on it an open structure. The RuvB hexamer acts as an ATP-dependent pump, pulling dsDNA into and through the RuvAB complex. HJ branch migration allows RuvC to scan DNA until it finds its consensus sequence, where it cleaves and resolves the cruciform DNA. The polypeptide is Holliday junction branch migration complex subunit RuvA (Amoebophilus asiaticus (strain 5a2)).